The sequence spans 242 residues: N-alpha-acetyltransferase 60 (242 aa).

The Cytoplasmic portion of the chain corresponds to 1 to 192 (MTEVVPSSAL…GGHPPWTILD (192 aa)). In terms of domain architecture, N-acetyltransferase spans 13–182 (VSLRLLCHDD…DGFTYVLYIN (170 aa)). Residue Tyr38 participates in substrate binding. Lys79 carries the N6-acetyllysine; by autocatalysis modification. The active site involves Tyr97. Leu99 serves as a coordination point for substrate. 101-103 (LGV) contacts acetyl-CoA. N6-acetyllysine; by autocatalysis is present on residues Lys105, Lys109, and Lys121. 109-114 (KHGIGS) is an acetyl-CoA binding site. His138 is an active-site residue. Residues Asn143 and 150-153 (YENR) each bind acetyl-CoA. The segment at 162–173 (PYYYSIRGVLKD) is required for homodimerization. Tyr165 provides a ligand contact to substrate. Positions 193–236 (YIQHLGSALANLSPCSIPHRIYRQAHSLLCSFLPWSSISSKGGI) form an intramembrane region, helical. Over 237 to 242 (EYSRTM) the chain is Cytoplasmic.

Belongs to the acetyltransferase family. NAA60 subfamily. As to quaternary structure, monomer and homodimer; monomer in presence of substrate and homodimer in its absence. Post-translationally, acetylated: autoacetylation is required for optimal acetyltransferase activity.

It is found in the golgi apparatus membrane. It catalyses the reaction N-terminal L-methionyl-[transmembrane protein] + acetyl-CoA = N-terminal N(alpha)-acetyl-L-methionyl-[transmembrane protein] + CoA + H(+). The enzyme catalyses L-lysyl-[protein] + acetyl-CoA = N(6)-acetyl-L-lysyl-[protein] + CoA + H(+). In terms of biological role, N-alpha-acetyltransferase that specifically mediates the acetylation of N-terminal residues of the transmembrane proteins, with a strong preference for N-termini facing the cytosol. Displays N-terminal acetyltransferase activity towards a range of N-terminal sequences including those starting with Met-Lys, Met-Val, Met-Ala and Met-Met. Required for normal chromosomal segregation during anaphase. May also show histone acetyltransferase activity; such results are however unclear in vivo and would require additional experimental evidences. The polypeptide is N-alpha-acetyltransferase 60 (Naa60) (Rattus norvegicus (Rat)).